We begin with the raw amino-acid sequence, 257 residues long: Diacetyl reductase [(S)-acetoin forming] (257 aa).

Position 6 to 30 (6 to 30 (IITGSAGGLGKGIAERLANDGFNIV)) interacts with NAD(+). Ser139 serves as a coordination point for substrate. The active-site Proton acceptor is Tyr152. Residue Lys156 is part of the active site.

The protein belongs to the short-chain dehydrogenases/reductases (SDR) family.

The enzyme catalyses (S)-acetoin + NAD(+) = diacetyl + NADH + H(+). Its function is as follows. Catalyzes the irreversible reduction of 2,3-butanediol to (S)-acetoin in the presence of NADH. The sequence is that of Diacetyl reductase [(S)-acetoin forming] (butA) from Staphylococcus epidermidis (strain ATCC 35984 / DSM 28319 / BCRC 17069 / CCUG 31568 / BM 3577 / RP62A).